The following is a 100-amino-acid chain: Urease subunit gamma (100 aa).

It belongs to the urease gamma subunit family. In terms of assembly, heterotrimer of UreA (gamma), UreB (beta) and UreC (alpha) subunits. Three heterotrimers associate to form the active enzyme.

The protein resides in the cytoplasm. It catalyses the reaction urea + 2 H2O + H(+) = hydrogencarbonate + 2 NH4(+). Its pathway is nitrogen metabolism; urea degradation; CO(2) and NH(3) from urea (urease route): step 1/1. In Streptomyces avermitilis (strain ATCC 31267 / DSM 46492 / JCM 5070 / NBRC 14893 / NCIMB 12804 / NRRL 8165 / MA-4680), this protein is Urease subunit gamma.